Consider the following 255-residue polypeptide: DNA polymerase epsilon subunit C (255 aa).

A disordered region spans residues 109–255; sequence KTSSGLHKLS…DEDEASADDG (147 aa). Residues 135 to 156 are compositionally biased toward acidic residues; it reads MEEDIPEEDLQEDDEMDVDETE. Positions 171-184 are enriched in low complexity; the sequence is KASASAKSILSAFK. 2 stretches are compositionally biased toward acidic residues: residues 199 to 219 and 236 to 255; these read TEEDEGDEKEEDEDEEEEIDP and DLDEESEVSSDEDEASADDG.

Heterotetramer. Consists of four subunits: POL2, DPB2, DPB3 and DPB4.

It is found in the nucleus. Its function is as follows. As accessory component of the DNA polymerase epsilon (DNA polymerase II) participates in chromosomal DNA replication. This Candida glabrata (strain ATCC 2001 / BCRC 20586 / JCM 3761 / NBRC 0622 / NRRL Y-65 / CBS 138) (Yeast) protein is DNA polymerase epsilon subunit C (DPB3).